The primary structure comprises 238 residues: Small ribosomal subunit protein uS2 (238 aa).

The protein belongs to the universal ribosomal protein uS2 family.

This chain is Small ribosomal subunit protein uS2, found in Haemophilus ducreyi (strain 35000HP / ATCC 700724).